A 101-amino-acid chain; its full sequence is Integration host factor subunit alpha (101 aa).

Belongs to the bacterial histone-like protein family. Heterodimer of an alpha and a beta chain.

Functionally, this protein is one of the two subunits of integration host factor, a specific DNA-binding protein that functions in genetic recombination as well as in transcriptional and translational control. The sequence is that of Integration host factor subunit alpha from Dinoroseobacter shibae (strain DSM 16493 / NCIMB 14021 / DFL 12).